The primary structure comprises 1349 residues: Spike glycoprotein (1349 aa).

The first 13 residues, 1 to 13, serve as a signal peptide directing secretion; it reads MFFILLITLPSVF. Topologically, residues 14-1293 are extracellular; it reads AVIGDLKCNT…GTYEYYVKWP (1280 aa). In terms of domain architecture, BetaCoV S1-NTD spans 15–298; sequence VIGDLKCNTS…DFMSEIMCKT (284 aa). 7 disulfides stabilise this stretch: Cys-21–Cys-165, Cys-160–Cys-193, Cys-172–Cys-252, Cys-286–Cys-296, Cys-331–Cys-356, Cys-374–Cys-427, and Cys-386–Cys-601. N-linked (GlcNAc...) asparagine; by host glycans are attached at residues Asn-22, Asn-59, and Asn-133. An N-linked (GlcNAc...) asparagine; by host glycan is attached at Asn-198. Residues 329–603 enclose the BetaCoV S1-CTD domain; sequence PNCDIEAWLN…DVNSGTTCST (275 aa). N-linked (GlcNAc...) asparagine; by host glycans are attached at residues Asn-437, Asn-456, Asn-512, Asn-611, Asn-635, Asn-662, Asn-682, Asn-700, Asn-725, Asn-774, and Asn-881. 2 fusion peptide regions span residues 900-921 and 919-939; these read SAIEDLLFDKVKLSDVGFVQAY and QAYNNCTGGAEIRDLICVQSY. An N-linked (GlcNAc...) asparagine; by host glycan is attached at Asn-923. Cys-924 and Cys-935 are joined by a disulfide. The tract at residues 1000-1050 is heptad repeat 1; that stretch reads QKLIASAFNNALDSIQEGFDATNSALVKIQAVVNANAEALNNLLQQLSNRF. Positions 1029–1073 form a coiled coil; the sequence is QAVVNANAEALNNLLQQLSNRFGAISASLQEILSRLDALEAKAQI. N-linked (GlcNAc...) asparagine; by host glycans are attached at residues Asn-1180, Asn-1210, Asn-1220, Asn-1239, Asn-1253, and Asn-1274. The tract at residues 1244-1282 is heptad repeat 2; it reads APDLSFDYINVTFLDLQDEMNRLQEAIKVLNHSYINLKD. A coiled-coil region spans residues 1255–1283; the sequence is TFLDLQDEMNRLQEAIKVLNHSYINLKDI. A helical transmembrane segment spans residues 1294-1314; that stretch reads WYVWLLICLAGVVMLVLLFFI. Residues 1315 to 1349 lie on the Cytoplasmic side of the membrane; it reads CCCTGCGTSCFKKCGGCFDDYTGHQEFVIKTSHDD. Residues 1345-1349 carry the KxHxx motif; that stretch reads TSHDD.

The protein belongs to the betacoronaviruses spike protein family. In terms of assembly, homotrimer; each monomer consists of a S1 and a S2 subunit. The resulting peplomers protrude from the virus surface as spikes. In terms of processing, specific enzymatic cleavages in vivo yield mature proteins. The precursor is processed into S1 and S2 by host cell furin or another cellular protease to yield the mature S1 and S2 proteins. Additionally, a second cleavage leads to the release of a fusion peptide after viral attachment to host cell receptor. The cytoplasmic Cys-rich domain is palmitoylated. Spike glycoprotein is digested within host endosomes.

The protein localises to the virion membrane. It is found in the host endoplasmic reticulum-Golgi intermediate compartment membrane. It localises to the host cell membrane. Attaches the virion to the cell membrane by interacting with host receptor, initiating the infection. Functionally, mediates fusion of the virion and cellular membranes by acting as a class I viral fusion protein. Under the current model, the protein has at least three conformational states: pre-fusion native state, pre-hairpin intermediate state, and post-fusion hairpin state. During viral and target cell membrane fusion, the coiled coil regions (heptad repeats) assume a trimer-of-hairpins structure, positioning the fusion peptide in close proximity to the C-terminal region of the ectodomain. The formation of this structure appears to drive apposition and subsequent fusion of viral and target cell membranes. Its function is as follows. Acts as a viral fusion peptide which is unmasked following S2 cleavage occurring upon virus endocytosis. The chain is Spike glycoprotein from Porcine hemagglutinating encephalomyelitis virus (strain IAF-404) (HEV).